Reading from the N-terminus, the 321-residue chain is Ubiquinone biosynthesis protein COQ4, mitochondrial (321 aa).

Zn(2+) contacts are provided by histidine 205, aspartate 206, histidine 209, and glutamate 221.

Belongs to the COQ4 family. In terms of assembly, component of a multi-subunit COQ enzyme complex, composed of at least COQ3, COQ4, COQ5, COQ6, COQ7 and COQ9. Zn(2+) serves as cofactor.

The protein localises to the mitochondrion inner membrane. It catalyses the reaction a 4-hydroxy-3-methoxy-5-(all-trans-polyprenyl)benzoate + H(+) = a 2-methoxy-6-(all-trans-polyprenyl)phenol + CO2. Its pathway is cofactor biosynthesis; ubiquinone biosynthesis. In terms of biological role, lyase that catalyzes the C1-decarboxylation of 4-hydroxy-3-methoxy-5-(all-trans-polyprenyl)benzoic acid into 2-methoxy-6-(all-trans-polyprenyl)phenol during ubiquinone biosynthesis. This Candida tropicalis (strain ATCC MYA-3404 / T1) (Yeast) protein is Ubiquinone biosynthesis protein COQ4, mitochondrial.